The sequence spans 223 residues: Translation initiation factor 6 (223 aa).

It belongs to the eIF-6 family.

Its function is as follows. Binds to the 50S ribosomal subunit and prevents its association with the 30S ribosomal subunit to form the 70S initiation complex. This is Translation initiation factor 6 from Sulfolobus acidocaldarius (strain ATCC 33909 / DSM 639 / JCM 8929 / NBRC 15157 / NCIMB 11770).